We begin with the raw amino-acid sequence, 548 residues long: Chaperonin GroEL (548 aa).

Residues 30-33 (TLGP), Lys51, 87-91 (DGTTT), Gly415, 479-481 (NAA), and Asp495 each bind ATP. The tract at residues 525-548 (PKEDKTSDASSSPAGGMGGMGGMM) is disordered. Positions 539–548 (GGMGGMGGMM) are enriched in gly residues.

This sequence belongs to the chaperonin (HSP60) family. Forms a cylinder of 14 subunits composed of two heptameric rings stacked back-to-back. Interacts with the co-chaperonin GroES.

It localises to the cytoplasm. It catalyses the reaction ATP + H2O + a folded polypeptide = ADP + phosphate + an unfolded polypeptide.. Together with its co-chaperonin GroES, plays an essential role in assisting protein folding. The GroEL-GroES system forms a nano-cage that allows encapsulation of the non-native substrate proteins and provides a physical environment optimized to promote and accelerate protein folding. This Buchnera aphidicola subsp. Rhopalosiphum padi protein is Chaperonin GroEL.